The sequence spans 748 residues: Polyribonucleotide nucleotidyltransferase (748 aa).

Positions 487 and 493 each coordinate Mg(2+). In terms of domain architecture, KH spans 554-613 (PSTTTIKIDKDKIRDIIGPSGKVIKEICETSGAKIDISDDGTVSVYASDRDKLKVALDKI). In terms of domain architecture, S1 motif spans 623–691 (GEIFNGTVVK…NKGKAKLTIK (69 aa)). A disordered region spans residues 693 to 733 (ADKDKSSNNTKPKTHVNNTKDNSEPEQRRDSSKKRAWNEDN). Residues 699–712 (SNNTKPKTHVNNTK) show a composition bias toward polar residues. The segment covering 713 to 722 (DNSEPEQRRD) has biased composition (basic and acidic residues).

It belongs to the polyribonucleotide nucleotidyltransferase family. It depends on Mg(2+) as a cofactor.

It is found in the cytoplasm. It catalyses the reaction RNA(n+1) + phosphate = RNA(n) + a ribonucleoside 5'-diphosphate. Its function is as follows. Involved in mRNA degradation. Catalyzes the phosphorolysis of single-stranded polyribonucleotides processively in the 3'- to 5'-direction. The polypeptide is Polyribonucleotide nucleotidyltransferase (Rickettsia peacockii (strain Rustic)).